We begin with the raw amino-acid sequence, 354 residues long: Uroporphyrinogen decarboxylase (354 aa).

Residues 27-31, F46, D77, Y154, S209, and H327 contribute to the substrate site; that span reads RQAGR.

The protein belongs to the uroporphyrinogen decarboxylase family. As to quaternary structure, homodimer.

The protein localises to the cytoplasm. The enzyme catalyses uroporphyrinogen III + 4 H(+) = coproporphyrinogen III + 4 CO2. Its pathway is porphyrin-containing compound metabolism; protoporphyrin-IX biosynthesis; coproporphyrinogen-III from 5-aminolevulinate: step 4/4. Its function is as follows. Catalyzes the decarboxylation of four acetate groups of uroporphyrinogen-III to yield coproporphyrinogen-III. The polypeptide is Uroporphyrinogen decarboxylase (Pseudomonas syringae pv. tomato (strain ATCC BAA-871 / DC3000)).